A 646-amino-acid polypeptide reads, in one-letter code: Serine/threonine-protein kinase sck2 (646 aa).

2 disordered regions span residues 17-85 (VSTN…LPEV) and 143-176 (GRDIGTSSRDSANVSRSSSMMSSHPIPTPAIQRT). Residues 68–80 (SDQSTVGNRNSND) show a composition bias toward polar residues. Residues 149 to 165 (SSRDSANVSRSSSMMSS) are compositionally biased toward low complexity. Positions 266 to 527 (FVPLKLIGKG…VEEVMKHPFF (262 aa)) constitute a Protein kinase domain. Residues 272–280 (IGKGTFGQV) and lysine 295 contribute to the ATP site. The active-site Proton acceptor is aspartate 392. Positions 528-605 (DGIDWKKLAA…IDASAMDEAF (78 aa)) constitute an AGC-kinase C-terminal domain. Residues 609-646 (NSNDSASSISSQDDYSKDNSDMDLNRANDEVFMGQIDP) are disordered. Over residues 610–621 (SNDSASSISSQD) the composition is skewed to low complexity. The segment covering 622-637 (DYSKDNSDMDLNRAND) has biased composition (basic and acidic residues).

Belongs to the protein kinase superfamily. AGC Ser/Thr protein kinase family. PKC subfamily.

The enzyme catalyses L-seryl-[protein] + ATP = O-phospho-L-seryl-[protein] + ADP + H(+). It carries out the reaction L-threonyl-[protein] + ATP = O-phospho-L-threonyl-[protein] + ADP + H(+). Functionally, protein kinase that is part of growth control pathway which is at least partially redundant with the cAMP pathway. The sequence is that of Serine/threonine-protein kinase sck2 (sck2) from Schizosaccharomyces pombe (strain 972 / ATCC 24843) (Fission yeast).